Here is a 299-residue protein sequence, read N- to C-terminus: tRNA dimethylallyltransferase (299 aa).

22-29 (GPTASGKT) is an ATP binding site. 24–29 (TASGKT) serves as a coordination point for substrate. Interaction with substrate tRNA regions lie at residues 47-50 (DSRQ) and 172-176 (QRLLR).

The protein belongs to the IPP transferase family. In terms of assembly, monomer. The cofactor is Mg(2+).

The catalysed reaction is adenosine(37) in tRNA + dimethylallyl diphosphate = N(6)-dimethylallyladenosine(37) in tRNA + diphosphate. Catalyzes the transfer of a dimethylallyl group onto the adenine at position 37 in tRNAs that read codons beginning with uridine, leading to the formation of N6-(dimethylallyl)adenosine (i(6)A). In Endomicrobium trichonymphae, this protein is tRNA dimethylallyltransferase.